The chain runs to 302 residues: MCAERLGHFMTLALVLATIDPARGTDATNPPEGPQDRSSQQKGRLSLQNTAEIQHCLVNAGDVGCGVFECFENNSCEIRGLHGICMTFLHNAGKFDAQGKSFIKDALKCKAHALRHRFGCISRKCPAIREMVFQLQRECYLKHDLCAAAQENTRVIVEMIHFKDLLLHEPYVDLVNLLLTCGEEVKEAITHSVQVQCEQNWGSLCSILSFCTSAIQRPPTAPPERQPQVDRAKLSRAHHGEAGHHLPEPSSRETGRGAKGERGSKSHPNAHARGRVGGLGAQGPSGSSEWEDEQSEYSDIRR.

The first 24 residues, 1 to 24 (MCAERLGHFMTLALVLATIDPARG), serve as a signal peptide directing secretion. Residues 23-44 (RGTDATNPPEGPQDRSSQQKGR) form a disordered region. The N-linked (GlcNAc...) asparagine glycan is linked to asparagine 73. Residues 218-302 (PPTAPPERQP…EQSEYSDIRR (85 aa)) form a disordered region. Positions 227 to 264 (PQVDRAKLSRAHHGEAGHHLPEPSSRETGRGAKGERGS) are enriched in basic and acidic residues. Serine 250 and serine 251 each carry phosphoserine. Threonine 254 carries the post-translational modification Phosphothreonine.

The protein belongs to the stanniocalcin family. In terms of assembly, homodimer; disulfide-linked.

The protein resides in the secreted. Its function is as follows. Has an anti-hypocalcemic action on calcium and phosphate homeostasis. The protein is Stanniocalcin-2 (STC2) of Macaca nemestrina (Pig-tailed macaque).